The primary structure comprises 473 residues: Cysteine--tRNA ligase (473 aa).

Cys-27 is a binding site for Zn(2+). The 'HIGH' region motif lies at 29-39 (ITPYDHVHVGH). Zn(2+) is bound by residues Cys-213, His-238, and Glu-242. A 'KMSKS' region motif is present at residues 271–275 (KMSKS). Position 274 (Lys-274) interacts with ATP.

The protein belongs to the class-I aminoacyl-tRNA synthetase family. Requires Zn(2+) as cofactor.

It is found in the cytoplasm. The enzyme catalyses tRNA(Cys) + L-cysteine + ATP = L-cysteinyl-tRNA(Cys) + AMP + diphosphate. This is Cysteine--tRNA ligase from Pyrobaculum calidifontis (strain DSM 21063 / JCM 11548 / VA1).